The sequence spans 212 residues: Octanoyltransferase (212 aa).

In terms of domain architecture, BPL/LPL catalytic spans 31 to 209 (AETQDEIWLV…HFANLLGYNI (179 aa)). Residues 70–77 (RGGQITYH), 138–140 (SLG), and 151–153 (GLA) contribute to the substrate site. Residue cysteine 169 is the Acyl-thioester intermediate of the active site.

Belongs to the LipB family.

The protein resides in the cytoplasm. It catalyses the reaction octanoyl-[ACP] + L-lysyl-[protein] = N(6)-octanoyl-L-lysyl-[protein] + holo-[ACP] + H(+). It functions in the pathway protein modification; protein lipoylation via endogenous pathway; protein N(6)-(lipoyl)lysine from octanoyl-[acyl-carrier-protein]: step 1/2. Catalyzes the transfer of endogenously produced octanoic acid from octanoyl-acyl-carrier-protein onto the lipoyl domains of lipoate-dependent enzymes. Lipoyl-ACP can also act as a substrate although octanoyl-ACP is likely to be the physiological substrate. This is Octanoyltransferase from Haemophilus influenzae (strain ATCC 51907 / DSM 11121 / KW20 / Rd).